The following is a 236-amino-acid chain: Large ribosomal subunit protein uL1 (236 aa).

Belongs to the universal ribosomal protein uL1 family. As to quaternary structure, part of the 50S ribosomal subunit.

Functionally, binds directly to 23S rRNA. The L1 stalk is quite mobile in the ribosome, and is involved in E site tRNA release. In terms of biological role, protein L1 is also a translational repressor protein, it controls the translation of the L11 operon by binding to its mRNA. This is Large ribosomal subunit protein uL1 from Heliobacterium modesticaldum (strain ATCC 51547 / Ice1).